Consider the following 468-residue polypeptide: ATP synthase subunit beta (468 aa).

155 to 162 provides a ligand contact to ATP; sequence GGAGVGKT.

The protein belongs to the ATPase alpha/beta chains family. In terms of assembly, F-type ATPases have 2 components, CF(1) - the catalytic core - and CF(0) - the membrane proton channel. CF(1) has five subunits: alpha(3), beta(3), gamma(1), delta(1), epsilon(1). CF(0) has three main subunits: a(1), b(2) and c(9-12). The alpha and beta chains form an alternating ring which encloses part of the gamma chain. CF(1) is attached to CF(0) by a central stalk formed by the gamma and epsilon chains, while a peripheral stalk is formed by the delta and b chains.

Its subcellular location is the cell membrane. It carries out the reaction ATP + H2O + 4 H(+)(in) = ADP + phosphate + 5 H(+)(out). In terms of biological role, produces ATP from ADP in the presence of a proton gradient across the membrane. The catalytic sites are hosted primarily by the beta subunits. This chain is ATP synthase subunit beta, found in Streptococcus pneumoniae serotype 19F (strain G54).